The sequence spans 1045 residues: Probable sucrose-phosphate synthase (1045 aa).

2 stretches are compositionally biased toward basic and acidic residues: residues 93–115 (ENEEAQRKTKRRMELERGRREAT) and 124–137 (EGEKDISAHGDSTR). Disordered regions lie at residues 93-141 (ENEE…PRLP), 222-243 (WSYGEPTEMLNPRDSNGFDDDD), and 662-692 (IASSRQRQPQWQRSSDEGLDNQEPESPSDSL). A compositionally biased stretch (low complexity) spans 664-674 (SSRQRQPQWQR).

The protein belongs to the glycosyltransferase 1 family. In terms of assembly, homodimer or homotetramer. As to expression, predominantly active in tap root.

It catalyses the reaction beta-D-fructose 6-phosphate + UDP-alpha-D-glucose = sucrose 6(F)-phosphate + UDP + H(+). It participates in glycan biosynthesis; sucrose biosynthesis; sucrose from D-fructose 6-phosphate and UDP-alpha-D-glucose: step 1/2. With respect to regulation, activity is regulated by phosphorylation and moderated by concentration of metabolites and light. Its function is as follows. Plays a role in photosynthetic sucrose synthesis by catalyzing the rate-limiting step of sucrose biosynthesis from UDP-glucose and fructose- 6-phosphate. Involved in the regulation of carbon partitioning in the leaves of plants. May regulate the synthesis of sucrose and therefore play a major role as a limiting factor in the export of photoassimilates out of the leaf. Plays a role for sucrose availability that is essential for plant growth and fiber elongation. This is Probable sucrose-phosphate synthase (SPS) from Beta vulgaris (Sugar beet).